A 135-amino-acid chain; its full sequence is Helix-loop-helix protein 2 (135 aa).

A disordered region spans residues 1–81 (MMLSPDQAAD…RRATAKYRSA (81 aa)). Residues 10-21 (DSDHPSSTHSDP) are compositionally biased toward basic and acidic residues. A compositionally biased stretch (basic residues) spans 68–81 (KRRRRRATAKYRSA). A bHLH domain is found at 77-129 (KYRSAHATRERIRVEAFNLAFAELRKLLPTLPPDKKLSKIEILRLAICYISYL).

As to quaternary structure, homodimer. Interacts and may form heterodimers with STAT3. In terms of tissue distribution, expressed in developing neurons. Transiently expressed in the cerebellum during postnatal development, exclusively in the premigratory zone of the external granule layer where postmitotic neurons undergo initial stages of neuronal differentiation. Expression is not detected in mature neurons. Expressed in the anterior lobe of the adult pituitary.

Its subcellular location is the nucleus. In terms of biological role, transcription factor which binds the E box motif 5'-CA[TC][AG]TG-3'. Involved in regulating energy expenditure, body mass, voluntary physical activity, mating behavior and reproductive longevity, acting through the hypothalamic-pituitary-gonadal axis. Acts as a transcriptional activator of target genes, including Ndn, Pcsk1, Mc4r. Is also a transcriptional activator of KISS1. May act centrally to regulate function of both white and brown adipose tissue. Together with NHLH1, required to maintain migration and survival of cells in the anterior extramural migration stream (aes), which forms the precerebellar nuclei. Also, in concert with Nhlh1, may determine fate of gonadotropin releasing hormone-1 (GnRH-1) neurons. This Mus musculus (Mouse) protein is Helix-loop-helix protein 2 (Nhlh2).